A 233-amino-acid chain; its full sequence is uncharacterized protein (233 aa).

One can recognise an HTH gntR-type domain in the interval 16–84 (KTLAKQVIER…TRGGTYFNDK (69 aa)). The segment at residues 44 to 63 (EMELMDILHVSRPVLREALS) is a DNA-binding region (H-T-H motif).

This is an uncharacterized protein from Bacillus subtilis (strain 168).